Here is a 386-residue protein sequence, read N- to C-terminus: O-methyltransferase aunE (386 aa).

W200 is a binding site for S-adenosyl-L-methionine. The Proton acceptor role is filled by H299.

Belongs to the class I-like SAM-binding methyltransferase superfamily. Cation-independent O-methyltransferase family.

It participates in secondary metabolite biosynthesis. Its function is as follows. O-methyltransferase; part of the gene cluster that mediates the biosynthesis of aurasperone B, a dimeric gamma-naphthopyrone. The first step in the biosynthesis of aurasperone B is the production of gamma-naphthopyrone precursor YWA1 by the non-reducing polyketide synthase albA, via condensation of one acetyl-CoA starter unit with 6 malonyl-CoA units. YWA1 is then methylated by aunE at position C-6 to yield foncesin which is further methylated at position C-8 by aunD to produce fonsecin B. A key enzyme in the biosynthetic pathway is the cytochrome P450 monooxygenase aunB which catalyzes the oxidative dimerization of fonsecin B to aurasperone B. AunB also catalyzes the oxidative dimerization of rubrofusarin B into aurasperone A. This Aspergillus niger (strain ATCC MYA-4892 / CBS 513.88 / FGSC A1513) protein is O-methyltransferase aunE.